Consider the following 208-residue polypeptide: Holliday junction resolvase RecU (208 aa).

Residues 1 to 28 (MNYPNGKPYSKNKPLDGRKSSPFSSNIE) are disordered. 4 residues coordinate Mg(2+): T87, D89, E102, and Q121.

This sequence belongs to the RecU family. Requires Mg(2+) as cofactor.

It is found in the cytoplasm. It carries out the reaction Endonucleolytic cleavage at a junction such as a reciprocal single-stranded crossover between two homologous DNA duplexes (Holliday junction).. Functionally, endonuclease that resolves Holliday junction intermediates in genetic recombination. Cleaves mobile four-strand junctions by introducing symmetrical nicks in paired strands. Promotes annealing of linear ssDNA with homologous dsDNA. Required for DNA repair, homologous recombination and chromosome segregation. This is Holliday junction resolvase RecU from Staphylococcus epidermidis (strain ATCC 12228 / FDA PCI 1200).